The following is a 370-amino-acid chain: Putative replication factor C small subunit L478 (370 aa).

41 to 48 (GPSGSGKK) provides a ligand contact to ATP. Over residues 342–353 (RNKEPEKSEKTK) the composition is skewed to basic and acidic residues. Residues 342-370 (RNKEPEKSEKTKSKTGKLSRTNSKKTIKN) are disordered. The span at 354-370 (SKTGKLSRTNSKKTIKN) shows a compositional bias: basic residues.

The protein belongs to the activator 1 small subunits family. RfcS subfamily.

Its function is as follows. Part of the RFC clamp loader complex which loads the PCNA sliding clamp onto DNA. The sequence is that of Putative replication factor C small subunit L478 from Acanthamoeba polyphaga (Amoeba).